A 397-amino-acid chain; its full sequence is Vacuolar protein sorting-associated protein 37A (397 aa).

Residues 1–22 (MSWLFPLTKSASSSAAGSPGGL) form a disordered region. Residue Ser-18 is modified to Phosphoserine. A VPS37 C-terminal domain is found at 308–397 (KSTFEKKMQR…AMHSQFHAPL (90 aa)).

The protein belongs to the VPS37 family. As to quaternary structure, component of the ESCRT-I complex (endosomal sorting complex required for transport I) which consists of TSG101, VPS28, a VPS37 protein (VPS37A to -D) and MVB12A or MVB12B in a 1:1:1:1 stoichiometry. Interacts with TSG101, VPS28 and HGS. Component of an ESCRT-I complex (endosomal sorting complex required for transport I) which consists of TSG101, VPS28, VPS37A and UBAP1 in a 1:1:1:1 stoichiometry. Widely expressed. Examined tissues include heart, brain, placenta, liver, skeletal muscle, kidney and pancreas. More abundant in liver. Strongly decreased or undetected in hepatomas.

The protein resides in the late endosome membrane. It localises to the nucleus. In terms of biological role, component of the ESCRT-I complex, a regulator of vesicular trafficking process. Required for the sorting of endocytic ubiquitinated cargos into multivesicular bodies. May be involved in cell growth and differentiation. The protein is Vacuolar protein sorting-associated protein 37A (VPS37A) of Homo sapiens (Human).